Here is a 157-residue protein sequence, read N- to C-terminus: MRVGIGIDVHQFVENRKLIIGGIEIPHTMGLKGHSDADVLLHAISDALLGAAALGDIGKHFPDTSPDFKDIDSRILLRHVGKLIADEGYTIVNIDSMLLMERPKVAPYIVAMRESIAECLDIETSRVSVKATTNEKLGYIGRQEGAAAHAVCLIEEK.

2 residues coordinate a divalent metal cation: D8 and H10. 4-CDP-2-C-methyl-D-erythritol 2-phosphate-binding positions include 8–10 (DVH) and 34–35 (HS). H42 is an a divalent metal cation binding site. 4-CDP-2-C-methyl-D-erythritol 2-phosphate is bound by residues 56-58 (DIG), 132-135 (TTNE), and R142.

It belongs to the IspF family. As to quaternary structure, homotrimer. A divalent metal cation is required as a cofactor.

The enzyme catalyses 4-CDP-2-C-methyl-D-erythritol 2-phosphate = 2-C-methyl-D-erythritol 2,4-cyclic diphosphate + CMP. It functions in the pathway isoprenoid biosynthesis; isopentenyl diphosphate biosynthesis via DXP pathway; isopentenyl diphosphate from 1-deoxy-D-xylulose 5-phosphate: step 4/6. Involved in the biosynthesis of isopentenyl diphosphate (IPP) and dimethylallyl diphosphate (DMAPP), two major building blocks of isoprenoid compounds. Catalyzes the conversion of 4-diphosphocytidyl-2-C-methyl-D-erythritol 2-phosphate (CDP-ME2P) to 2-C-methyl-D-erythritol 2,4-cyclodiphosphate (ME-CPP) with a corresponding release of cytidine 5-monophosphate (CMP). The chain is 2-C-methyl-D-erythritol 2,4-cyclodiphosphate synthase from Prosthecochloris aestuarii (strain DSM 271 / SK 413).